A 348-amino-acid polypeptide reads, in one-letter code: Flagellar P-ring protein (348 aa).

The first 16 residues, methionine 1 to alanine 16, serve as a signal peptide directing secretion.

The protein belongs to the FlgI family. In terms of assembly, the basal body constitutes a major portion of the flagellar organelle and consists of four rings (L,P,S, and M) mounted on a central rod.

Its subcellular location is the periplasm. It localises to the bacterial flagellum basal body. Assembles around the rod to form the L-ring and probably protects the motor/basal body from shearing forces during rotation. The protein is Flagellar P-ring protein of Campylobacter lari (strain RM2100 / D67 / ATCC BAA-1060).